The sequence spans 83 residues: uncharacterized protein (83 aa).

3 consecutive transmembrane segments (helical) span residues 4 to 24 (AILS…GVLM), 32 to 52 (IGNI…LKAF), and 54 to 74 (YYDL…IIIG).

The protein resides in the cell membrane. This is an uncharacterized protein from Methanocaldococcus jannaschii (strain ATCC 43067 / DSM 2661 / JAL-1 / JCM 10045 / NBRC 100440) (Methanococcus jannaschii).